Consider the following 307-residue polypeptide: Elongation factor Ts (307 aa).

The segment at 82 to 85 is involved in Mg(2+) ion dislocation from EF-Tu; it reads TDFV.

The protein belongs to the EF-Ts family.

Its subcellular location is the cytoplasm. Its function is as follows. Associates with the EF-Tu.GDP complex and induces the exchange of GDP to GTP. It remains bound to the aminoacyl-tRNA.EF-Tu.GTP complex up to the GTP hydrolysis stage on the ribosome. This Nautilia profundicola (strain ATCC BAA-1463 / DSM 18972 / AmH) protein is Elongation factor Ts.